The sequence spans 534 residues: T-complex protein 1 subunit gamma (534 aa).

An N-acetylmethionine modification is found at methionine 1. Serine 257 carries the phosphoserine modification. A disulfide bridge connects residues cysteine 371 and cysteine 377.

The protein belongs to the TCP-1 chaperonin family. In terms of assembly, heterooligomeric complex of about 850 to 900 kDa that forms two stacked rings, 12 to 16 nm in diameter.

Its subcellular location is the cytoplasm. Molecular chaperone; assists the folding of proteins upon ATP hydrolysis. Known to play a role, in vitro, in the folding of actin and tubulin. In yeast may play a role in mitotic spindle formation. In Saccharomyces cerevisiae (strain ATCC 204508 / S288c) (Baker's yeast), this protein is T-complex protein 1 subunit gamma (CCT3).